A 303-amino-acid chain; its full sequence is tRNA dimethylallyltransferase (303 aa).

9–16 (GPTAVGKT) provides a ligand contact to ATP. 11 to 16 (TAVGKT) serves as a coordination point for substrate. Residues 34-37 (DSRQ) are interaction with substrate tRNA.

It belongs to the IPP transferase family. As to quaternary structure, monomer. It depends on Mg(2+) as a cofactor.

It carries out the reaction adenosine(37) in tRNA + dimethylallyl diphosphate = N(6)-dimethylallyladenosine(37) in tRNA + diphosphate. Catalyzes the transfer of a dimethylallyl group onto the adenine at position 37 in tRNAs that read codons beginning with uridine, leading to the formation of N6-(dimethylallyl)adenosine (i(6)A). The chain is tRNA dimethylallyltransferase from Petrotoga mobilis (strain DSM 10674 / SJ95).